A 1393-amino-acid polypeptide reads, in one-letter code: DNA-directed RNA polymerase subunit beta (1393 aa).

This sequence belongs to the RNA polymerase beta chain family. The RNAP catalytic core consists of 2 alpha, 1 beta, 1 beta' and 1 omega subunit. When a sigma factor is associated with the core the holoenzyme is formed, which can initiate transcription.

The catalysed reaction is RNA(n) + a ribonucleoside 5'-triphosphate = RNA(n+1) + diphosphate. Functionally, DNA-dependent RNA polymerase catalyzes the transcription of DNA into RNA using the four ribonucleoside triphosphates as substrates. The chain is DNA-directed RNA polymerase subunit beta from Rhodospirillum rubrum (strain ATCC 11170 / ATH 1.1.1 / DSM 467 / LMG 4362 / NCIMB 8255 / S1).